We begin with the raw amino-acid sequence, 396 residues long: Subtilisin-like protease 5 (396 aa).

Positions 1-20 are cleaved as a signal peptide; the sequence is MTGFLTILSLSLAALSVTNA. Residues 21-116 constitute a propeptide that is removed on maturation; it reads AQILSVPQGA…VEPDAIIKQH (96 aa). An Inhibitor I9 domain is found at 37–114; that stretch reads YIVVMKDDTS…AFVEPDAIIK (78 aa). The region spanning 125–396 is the Peptidase S8 domain; sequence PWGLSRLSNR…SRLLYNGSGR (272 aa). Residues aspartate 156 and histidine 187 each act as charge relay system in the active site. 2 N-linked (GlcNAc...) asparagine glycosylation sites follow: asparagine 230 and asparagine 248. The active-site Charge relay system is serine 342. The disordered stretch occupies residues 376 to 396; it reads PTIRNPGPDTTSRLLYNGSGR. Asparagine 392 is a glycosylation site (N-linked (GlcNAc...) asparagine).

This sequence belongs to the peptidase S8 family.

It localises to the secreted. Secreted subtilisin-like serine protease with keratinolytic activity that contributes to pathogenicity. The polypeptide is Subtilisin-like protease 5 (SUB5) (Arthroderma gypseum (strain ATCC MYA-4604 / CBS 118893) (Microsporum gypseum)).